Here is a 467-residue protein sequence, read N- to C-terminus: Probable protein phosphatase 2C 55 (467 aa).

Residues 222–458 form the PPM-type phosphatase domain; that stretch reads SCYLPHPDKE…DDITVVVSYV (237 aa). Aspartate 252, glycine 253, aspartate 383, and aspartate 449 together coordinate Mn(2+).

Belongs to the PP2C family. Mg(2+) serves as cofactor. Requires Mn(2+) as cofactor.

The enzyme catalyses O-phospho-L-seryl-[protein] + H2O = L-seryl-[protein] + phosphate. The catalysed reaction is O-phospho-L-threonyl-[protein] + H2O = L-threonyl-[protein] + phosphate. The polypeptide is Probable protein phosphatase 2C 55 (Arabidopsis thaliana (Mouse-ear cress)).